The following is a 158-amino-acid chain: uncharacterized protein (158 aa).

2 helical membrane passes run 10–30 (LSSL…QFIV) and 137–157 (IEVF…AYFF).

The protein localises to the cell membrane. This is an uncharacterized protein from Bacillus subtilis (strain 168).